The following is a 457-amino-acid chain: Carboxypeptidase N catalytic chain (457 aa).

Residues 1–23 (MPDLPSAFLPLLLLSKFVTPVTF) form the signal peptide. Positions 24 to 338 (RHHRYDDLVR…EALIQFLEQV (315 aa)) constitute a Peptidase M14 domain. Cys-42 and Cys-104 form a disulfide bridge. Positions 86, 89, and 216 each coordinate Zn(2+). Cys-271 and Cys-311 are oxidised to a cystine. The active-site Proton donor/acceptor is the Glu-308. Thr-400, Thr-402, and Thr-409 each carry an O-linked (GalNAc...) threonine glycan. The disordered stretch occupies residues 418 to 457 (STTQVHPVQKAPGRGQGSRAKQPRTSRKKDQAAKRHRGPA).

It belongs to the peptidase M14 family. In terms of assembly, tetramer of two catalytic chains and two glycosylated inactive chains. The cofactor is Zn(2+). Plasma. Expressed in liver.

It is found in the secreted. Its subcellular location is the extracellular space. The catalysed reaction is Release of a C-terminal basic amino acid, preferentially lysine.. Functionally, protects the body from potent vasoactive and inflammatory peptides containing C-terminal Arg or Lys (such as kinins or anaphylatoxins) which are released into the circulation. The protein is Carboxypeptidase N catalytic chain (Cpn1) of Rattus norvegicus (Rat).